Consider the following 182-residue polypeptide: Adenylate kinase (182 aa).

ATP is bound at residue 12–17 (GAGKGT). The segment at 32 to 61 (STGDLLRAEVGAKTPLGQEAAAVMNRGELV) is NMP. AMP is bound by residues Thr33, Arg38, 59 to 61 (ELV), 85 to 88 (GFPR), and Gln92. Positions 126 to 132 (SRGRSDD) are LID. Arg127 serves as a coordination point for ATP. Positions 129 and 140 each coordinate AMP. Gly168 lines the ATP pocket.

The protein belongs to the adenylate kinase family. In terms of assembly, monomer.

It localises to the cytoplasm. It carries out the reaction AMP + ATP = 2 ADP. It participates in purine metabolism; AMP biosynthesis via salvage pathway; AMP from ADP: step 1/1. Catalyzes the reversible transfer of the terminal phosphate group between ATP and AMP. Plays an important role in cellular energy homeostasis and in adenine nucleotide metabolism. This is Adenylate kinase from Prochlorococcus marinus (strain MIT 9303).